The following is a 285-amino-acid chain: Phospholipid phosphatase 1 (285 aa).

Residues 1–6 (MFDKTR) are Cytoplasmic-facing. Positions 5–7 (TRL) match the PDZ-binding; involved in localization to the apical cell membrane motif. The chain crosses the membrane as a helical span at residues 7–27 (LPYVALDVLCVLLAGLPFAIL). Residues 28-53 (TSRHTPFQRGLFCNDESIKYPYKEDT) lie on the Extracellular side of the membrane. Residues 54-74 (IPYPLLGGIIIPFSIIVMIVG) traverse the membrane as a helical segment. At 75–94 (ETLSVYFNLLHSNSFIRNNY) the chain is on the cytoplasmic side. A helical membrane pass occupies residues 95-115 (IATIYKAIGTFLFGAAASQSL). Residues 116–164 (TDIAKYSIGRLRPHFLDVCDPDWSKINCSDGYIENYICRGNAQKVKEGR) are Extracellular-facing. Residues 120 to 128 (KYSIGRLRP) form a phosphatase sequence motif I region. Asn-142 carries N-linked (GlcNAc...) asparagine glycosylation. A helical transmembrane segment spans residues 165–185 (LSFYSGHSSFSMYCMLFVALY). The interval 168–171 (YSGH) is phosphatase sequence motif II. His-171 (proton donors) is an active-site residue. Residues 186–196 (LQARMKGDWAR) lie on the Cytoplasmic side of the membrane. A helical transmembrane segment spans residues 197–216 (LLRPTLQFGLVAVSIYVGLS). The tract at residues 216–227 (SRVSDYKHHWSD) is phosphatase sequence motif III. Residues 217-229 (RVSDYKHHWSDVL) lie on the Extracellular side of the membrane. The Nucleophile role is filled by His-223. The helical transmembrane segment at 230-250 (TGLIQGALVAIVVAVYVSDFF) threads the bilayer. At 251–285 (KERNSPFKERKEEDSHTTLHETPTTGNHYRNSHQP) the chain is on the cytoplasmic side. Basic and acidic residues predominate over residues 257–269 (FKERKEEDSHTTL). The segment at 257–285 (FKERKEEDSHTTLHETPTTGNHYRNSHQP) is disordered. Positions 270–285 (HETPTTGNHYRNSHQP) are enriched in polar residues.

It belongs to the PA-phosphatase related phosphoesterase family. Forms functional homodimers and homooligomers that are not required for substrate recognition and catalytic activity. Can also form heterooligomers with PLPP2 and PLPP3. N-glycosylated. N-linked sugars are of the complex type. N-glycosylation is not required for the phosphatase activity.

The protein localises to the cell membrane. The protein resides in the apical cell membrane. It is found in the membrane raft. Its subcellular location is the membrane. It localises to the caveola. The enzyme catalyses a 1,2-diacyl-sn-glycero-3-phosphate + H2O = a 1,2-diacyl-sn-glycerol + phosphate. It carries out the reaction 1,2-dihexadecanoyl-sn-glycero-3-phosphate + H2O = 1,2-dihexadecanoyl-sn-glycerol + phosphate. The catalysed reaction is 1,2-di-(9Z-octadecenoyl)-sn-glycero-3-phosphate + H2O = 1,2-di-(9Z-octadecenoyl)-sn-glycerol + phosphate. It catalyses the reaction a monoacyl-sn-glycero-3-phosphate + H2O = a monoacylglycerol + phosphate. The enzyme catalyses (9Z)-octadecenoyl-sn-glycero-3-phosphate + H2O = (9Z-octadecenoyl)-glycerol + phosphate. It carries out the reaction a 1-acyl-sn-glycero-3-phosphate + H2O = a 1-acyl-sn-glycerol + phosphate. The catalysed reaction is 1-(9Z-octadecenoyl)-sn-glycero-3-phosphate + H2O = 1-(9Z-octadecenoyl)-sn-glycerol + phosphate. It catalyses the reaction a 1,2-diacyl-sn-glycerol 3-diphosphate + H2O = a 1,2-diacyl-sn-glycero-3-phosphate + phosphate + H(+). The enzyme catalyses sphing-4-enine 1-phosphate + H2O = sphing-4-enine + phosphate. It carries out the reaction an N-acylsphing-4-enine 1-phosphate + H2O = an N-acylsphing-4-enine + phosphate. The catalysed reaction is N-(octanoyl)-sphing-4-enine-1-phosphate + H2O = N-octanoylsphing-4-enine + phosphate. It catalyses the reaction N-(9Z-octadecenoyl)-ethanolamine phosphate + H2O = N-(9Z-octadecenoyl) ethanolamine + phosphate. The enzyme catalyses 1-hexadecanoyl-2-(9Z-octadecenoyl)-sn-glycero-3-phosphate + H2O = 1-hexadecanoyl-2-(9Z-octadecenoyl)-sn-glycerol + phosphate. The protein operates within lipid metabolism; phospholipid metabolism. Its activity is regulated as follows. Magnesium-independent phospholipid phosphatase. Insensitive to N-ethylmaleimide. Functionally, magnesium-independent phospholipid phosphatase of the plasma membrane that catalyzes the dephosphorylation of a variety of glycerolipid and sphingolipid phosphate esters including phosphatidate/PA, lysophosphatidate/LPA, diacylglycerol pyrophosphate/DGPP, sphingosine 1-phosphate/S1P and ceramide 1-phosphate/C1P. Also acts on N-oleoyl ethanolamine phosphate/N-(9Z-octadecenoyl)-ethanolamine phosphate, a potential physiological compound. Through its extracellular phosphatase activity allows both the hydrolysis and the cellular uptake of these bioactive lipid mediators from the milieu, regulating signal transduction in different cellular processes. It is for instance essential for the extracellular hydrolysis of S1P and subsequent conversion into intracellular S1P. Involved in the regulation of inflammation, platelets activation, cell proliferation and migration among other processes. May also have an intracellular activity to regulate phospholipid-mediated signaling pathways. The chain is Phospholipid phosphatase 1 from Sus scrofa (Pig).